A 259-amino-acid polypeptide reads, in one-letter code: MNRLYPHPIIAREGWPIIGGGLALSLLVSMCCGWWSLPFWVFTVFALQFFRDPAREIPQNPEAVLSPVDGRIVVVERARDPYRDVDALKISIFMNVFNVHSQKSPADCTVTKVVYNKGKFVNADLDKASTENERNAVLATTASGREITFVQVAGLVARRILCYTQAGAKLSRGERYGFIRFGSRVDVYLPVDAQAQVAIGDKVTGVKTVLARLPLTDSQADPVSQAASVETAANPSAEQQQIEAAAAKIQAAVQDVLKD.

Ser183 (schiff-base intermediate with substrate; via pyruvic acid) is an active-site residue. Residue Ser183 is modified to Pyruvic acid (Ser); by autocatalysis.

This sequence belongs to the phosphatidylserine decarboxylase family. PSD-A subfamily. In terms of assembly, heterodimer of a large membrane-associated beta subunit and a small pyruvoyl-containing alpha subunit. Requires pyruvate as cofactor. Is synthesized initially as an inactive proenzyme. Formation of the active enzyme involves a self-maturation process in which the active site pyruvoyl group is generated from an internal serine residue via an autocatalytic post-translational modification. Two non-identical subunits are generated from the proenzyme in this reaction, and the pyruvate is formed at the N-terminus of the alpha chain, which is derived from the carboxyl end of the proenzyme. The post-translation cleavage follows an unusual pathway, termed non-hydrolytic serinolysis, in which the side chain hydroxyl group of the serine supplies its oxygen atom to form the C-terminus of the beta chain, while the remainder of the serine residue undergoes an oxidative deamination to produce ammonia and the pyruvoyl prosthetic group on the alpha chain.

The protein resides in the cell membrane. It catalyses the reaction a 1,2-diacyl-sn-glycero-3-phospho-L-serine + H(+) = a 1,2-diacyl-sn-glycero-3-phosphoethanolamine + CO2. The protein operates within phospholipid metabolism; phosphatidylethanolamine biosynthesis; phosphatidylethanolamine from CDP-diacylglycerol: step 2/2. Functionally, catalyzes the formation of phosphatidylethanolamine (PtdEtn) from phosphatidylserine (PtdSer). The polypeptide is Phosphatidylserine decarboxylase proenzyme (Neisseria gonorrhoeae (strain NCCP11945)).